Here is a 409-residue protein sequence, read N- to C-terminus: Tryptophan synthase beta chain (409 aa).

Lys104 is modified (N6-(pyridoxal phosphate)lysine).

The protein belongs to the TrpB family. As to quaternary structure, tetramer of two alpha and two beta chains. It depends on pyridoxal 5'-phosphate as a cofactor.

It catalyses the reaction (1S,2R)-1-C-(indol-3-yl)glycerol 3-phosphate + L-serine = D-glyceraldehyde 3-phosphate + L-tryptophan + H2O. It functions in the pathway amino-acid biosynthesis; L-tryptophan biosynthesis; L-tryptophan from chorismate: step 5/5. Functionally, the beta subunit is responsible for the synthesis of L-tryptophan from indole and L-serine. The protein is Tryptophan synthase beta chain of Trichodesmium erythraeum (strain IMS101).